A 410-amino-acid polypeptide reads, in one-letter code: E3 ubiquitin-protein ligase MARCHF4 (410 aa).

The signal sequence occupies residues 1 to 18 (MLMPLCGLLWWWWCCCSG). A disordered region spans residues 92-136 (GPREVVGREPPPVPPPPPLPPSSVEDDWGGPATEPPASLLSSASS). Positions 100 to 112 (EPPPVPPPPPLPP) are enriched in pro residues. The span at 126–136 (PPASLLSSASS) shows a compositional bias: low complexity. The RING-CH-type zinc finger occupies 155–215 (DSGMRTPLCR…ELCYYKYHVI (61 aa)). C163, C166, C179, C181, H189, C192, C205, and C208 together coordinate Zn(2+). The next 2 helical transmembrane spans lie at 238–258 (VAAA…LIWS) and 272–292 (LFQI…GLII). 2 disordered regions span residues 324-372 (EDQK…SGPL) and 390-410 (PHEQ…VTTV). A compositionally biased stretch (polar residues) spans 333–346 (NPRTSSSTQANIPS). Over residues 352-366 (AGTPAPEQGPAQAAG) the composition is skewed to low complexity.

Expressed in brain and placenta.

Its subcellular location is the golgi apparatus membrane. The enzyme catalyses S-ubiquitinyl-[E2 ubiquitin-conjugating enzyme]-L-cysteine + [acceptor protein]-L-lysine = [E2 ubiquitin-conjugating enzyme]-L-cysteine + N(6)-ubiquitinyl-[acceptor protein]-L-lysine.. It participates in protein modification; protein ubiquitination. Functionally, E3 ubiquitin-protein ligase that may mediate ubiquitination of MHC-I and CD4, and promote their subsequent endocytosis and sorting to lysosomes via multivesicular bodies. E3 ubiquitin ligases accept ubiquitin from an E2 ubiquitin-conjugating enzyme in the form of a thioester and then directly transfer the ubiquitin to targeted substrates. The protein is E3 ubiquitin-protein ligase MARCHF4 of Homo sapiens (Human).